A 206-amino-acid chain; its full sequence is Large ribosomal subunit protein uL4 (206 aa).

The segment at 42–94 is disordered; sequence RRQQGSHKAQGRGDVSRTGSKMYKQKGTGRARHHSARAPQFRGGGQAHGPVVR. Over residues 64-77 the composition is skewed to basic residues; the sequence is YKQKGTGRARHHSA.

The protein belongs to the universal ribosomal protein uL4 family. As to quaternary structure, part of the 50S ribosomal subunit.

Its function is as follows. One of the primary rRNA binding proteins, this protein initially binds near the 5'-end of the 23S rRNA. It is important during the early stages of 50S assembly. It makes multiple contacts with different domains of the 23S rRNA in the assembled 50S subunit and ribosome. In terms of biological role, forms part of the polypeptide exit tunnel. In Brucella abortus biovar 1 (strain 9-941), this protein is Large ribosomal subunit protein uL4.